We begin with the raw amino-acid sequence, 205 residues long: FMN-dependent NADH:quinone oxidoreductase (205 aa).

Residues Ser-10 and 16 to 18 (SVS) contribute to the FMN site.

Belongs to the azoreductase type 1 family. Homodimer. The cofactor is FMN.

It carries out the reaction 2 a quinone + NADH + H(+) = 2 a 1,4-benzosemiquinone + NAD(+). It catalyses the reaction N,N-dimethyl-1,4-phenylenediamine + anthranilate + 2 NAD(+) = 2-(4-dimethylaminophenyl)diazenylbenzoate + 2 NADH + 2 H(+). Its function is as follows. Quinone reductase that provides resistance to thiol-specific stress caused by electrophilic quinones. Functionally, also exhibits azoreductase activity. Catalyzes the reductive cleavage of the azo bond in aromatic azo compounds to the corresponding amines. In Agrobacterium fabrum (strain C58 / ATCC 33970) (Agrobacterium tumefaciens (strain C58)), this protein is FMN-dependent NADH:quinone oxidoreductase.